The primary structure comprises 739 residues: Ent-kaurene synthase-like 3 (739 aa).

Mg(2+) is bound by residues Asp-475, Asp-479, Asn-619, Thr-623, and Glu-627. The short motif at 475-479 is the DDXXD motif element; that stretch reads DDFFD.

This sequence belongs to the terpene synthase family. It depends on Mg(2+) as a cofactor. In terms of tissue distribution, expressed in roots and stems.

This chain is Ent-kaurene synthase-like 3 (KSL3), found in Oryza sativa subsp. japonica (Rice).